We begin with the raw amino-acid sequence, 67 residues long: Systemic RNA interference defective protein 5 (67 aa).

Residues 1-18 (MPSKNCAKNLHACQWERD) lie on the Extracellular side of the membrane. A helical membrane pass occupies residues 19 to 39 (IALVFLGLMVLFNIGQVVYMN). Over 40-67 (RARLYRLIRRGAEQIPADDEEPIIGIRD) the chain is Cytoplasmic.

In terms of tissue distribution, ubiquitously present in most tissues tested. Expressed in the somatic cells of intestine, muscle, neurons, somatic gonad and embryos but not in the germline (at protein level).

It localises to the late endosome membrane. In terms of biological role, plays a role in RNA-mediated gene silencing by mediating transport of both ingested and endogenous dsRNA between cells. Not required for the uptake of dsRNA from the intestinal lumen. In Caenorhabditis elegans, this protein is Systemic RNA interference defective protein 5.